An 84-amino-acid polypeptide reads, in one-letter code: Cytochrome b559 subunit alpha (84 aa).

The chain crosses the membrane as a helical span at residues 24–38 (IIHAVTLPAIFIAGF). His26 provides a ligand contact to heme.

Belongs to the PsbE/PsbF family. As to quaternary structure, heterodimer of an alpha subunit and a beta subunit. PSII is composed of 1 copy each of membrane proteins PsbA, PsbB, PsbC, PsbD, PsbE, PsbF, PsbH, PsbI, PsbJ, PsbK, PsbL, PsbM, PsbT, PsbX, PsbY, Psb30/Ycf12, peripheral proteins PsbO, CyanoQ (PsbQ), PsbU, PsbV and a large number of cofactors. It forms dimeric complexes. Requires heme b as cofactor.

Its subcellular location is the cellular thylakoid membrane. Its function is as follows. This b-type cytochrome is tightly associated with the reaction center of photosystem II (PSII). PSII is a light-driven water:plastoquinone oxidoreductase that uses light energy to abstract electrons from H(2)O, generating O(2) and a proton gradient subsequently used for ATP formation. It consists of a core antenna complex that captures photons, and an electron transfer chain that converts photonic excitation into a charge separation. This chain is Cytochrome b559 subunit alpha, found in Prochlorococcus marinus (strain MIT 9301).